The following is a 246-amino-acid chain: Mast cell protease 4 (246 aa).

The first 18 residues, 1 to 18 (MQALLFLMALLLPSGAGA), serve as a signal peptide directing secretion. The propeptide at 19-20 (EE) is activation peptide. The region spanning 21-244 (IIGGVESRPH…YVPWINRVIK (224 aa)) is the Peptidase S1 domain. Cysteine 50 and cysteine 66 are joined by a disulfide. Residues histidine 65 and aspartate 109 each act as charge relay system in the active site. Cystine bridges form between cysteine 143–cysteine 208 and cysteine 174–cysteine 187. Serine 202 serves as the catalytic Charge relay system.

It belongs to the peptidase S1 family. Granzyme subfamily. Monomer. Interacts with iripin-2, a serine protease inhibitor from Ixodes ricinus saliva. As to expression, submucosal mast cells. In femoral muscle, detected in myocytes but not in mast cells.

With respect to regulation, completely inhibited by serine protease inhibitors such as chymostatin, diisopropylfluorophosphate and phenylmethylsulfonyl fluoride, but not by p-tosyl-L-phenylalanine chloromethyl ketone, p-tosyl-L-lysine chloromethyl ketone, pepstatin, E-64, EDTA or o-phenanthroline. Also inhibited by lima bean trypsin inhibitor, soy bean trypsin inhibitor and human plasma alpha1-antichymotrypsin. Functionally, has chymotrypsin-like activity. Hydrolyzes the amide bonds of synthetic substrates having Tyr and Phe residues at the P1 position. Preferentially hydrolyzes the 'Tyr-4-|-Ile-5' bond of angiotensin I and the 'Phe-20-|-Ala-21' bond of amyloid beta-protein, and is less active towards the 'Phe-8-|-His-9' bond of angiotensin I and the 'Phe-4-|-Ala-5' and 'Tyr-10-|-Glu-11' bonds of amyloid beta-protein. Involved in thrombin regulation and fibronectin processing. The protein is Mast cell protease 4 (Mcpt4) of Mus musculus (Mouse).